The following is a 69-amino-acid chain: UPF0150 protein AF_1072 (69 aa).

Belongs to the UPF0150 family.

The protein is UPF0150 protein AF_1072 of Archaeoglobus fulgidus (strain ATCC 49558 / DSM 4304 / JCM 9628 / NBRC 100126 / VC-16).